The chain runs to 147 residues: Small ribosomal subunit protein bS6 (147 aa).

The disordered stretch occupies residues 107–147 (KEGRERKARPARAERRDDTEAEDLSDEEGVEAEDFEEEQGV). Residues 125-147 (TEAEDLSDEEGVEAEDFEEEQGV) are compositionally biased toward acidic residues.

Belongs to the bacterial ribosomal protein bS6 family.

Functionally, binds together with bS18 to 16S ribosomal RNA. In Cellvibrio japonicus (strain Ueda107) (Pseudomonas fluorescens subsp. cellulosa), this protein is Small ribosomal subunit protein bS6.